The following is a 455-amino-acid chain: Growth/differentiation factor 6 (455 aa).

An N-terminal signal peptide occupies residues 1 to 22; sequence MDTPRVLLSAVFLISFLWDLPG. Positions 23-335 are excised as a propeptide; the sequence is FQQASISSSS…LPSPGRRRRR (313 aa). Positions 29-93 are disordered; it reads SSSSSSAELG…EPPGRGPRVV (65 aa). Basic and acidic residues predominate over residues 45–76; sequence SRKEGKMQRAPRDSDAGREGQEPQPRPQDEPR. A compositionally biased stretch (low complexity) spans 77–91; the sequence is AQQPRAQEPPGRGPR. Asn114 carries an N-linked (GlcNAc...) asparagine glycan. Disordered stretches follow at residues 244–267 and 300–351; these read EAEARARGPQQPPPPDLRSLGFGR and AEAA…KKSR. Basic residues predominate over residues 330 to 351; that stretch reads GRRRRRTAFASRHGKRHGKKSR. Cystine bridges form between Cys354/Cys420, Cys383/Cys452, and Cys387/Cys454.

The protein belongs to the TGF-beta family. In terms of assembly, homodimer; disulfide-linked.

The protein resides in the secreted. In terms of biological role, growth factor that controls proliferation and cellular differentiation in the retina and bone formation. Plays a key role in regulating apoptosis during retinal development. Establishes dorsal-ventral positional information in the retina and controls the formation of the retinotectal map. Required for normal formation of bones and joints in the limbs, skull, digits and axial skeleton. Plays a key role in establishing boundaries between skeletal elements during development. Regulation of GDF6 expression seems to be a mechanism for evolving species-specific changes in skeletal structures. Seems to positively regulate differentiation of chondrogenic tissue through the growth factor receptors subunits BMPR1A, BMPR1B, BMPR2 and ACVR2A, leading to the activation of SMAD1-SMAD5-SMAD8 complex. The regulation of chondrogenic differentiation is inhibited by NOG. Also involved in the induction of adipogenesis from mesenchymal stem cells. This mechanism acts through the growth factor receptors subunits BMPR1A, BMPR2 and ACVR2A and the activation of SMAD1-SMAD5-SMAD8 complex and MAPK14/p38. This is Growth/differentiation factor 6 (GDF6) from Homo sapiens (Human).